The primary structure comprises 225 residues: Uridylate kinase (225 aa).

Residue 9–10 (GS) coordinates ATP. G46 lines the UMP pocket. ATP contacts are provided by G47 and R51. Residues D67 and 115–121 (THPAHTT) each bind UMP. Positions 141, 142, 147, and 150 each coordinate ATP.

The protein belongs to the UMP kinase family. Homohexamer.

Its subcellular location is the cytoplasm. It carries out the reaction UMP + ATP = UDP + ADP. The protein operates within pyrimidine metabolism; CTP biosynthesis via de novo pathway; UDP from UMP (UMPK route): step 1/1. Inhibited by UTP. Its function is as follows. Catalyzes the reversible phosphorylation of UMP to UDP. The sequence is that of Uridylate kinase from Methanococcus maripaludis (strain DSM 14266 / JCM 13030 / NBRC 101832 / S2 / LL).